Reading from the N-terminus, the 445-residue chain is UPF0210 protein SEQ_0468 (445 aa).

The protein belongs to the UPF0210 family. Homodimer.

The protein is UPF0210 protein SEQ_0468 of Streptococcus equi subsp. equi (strain 4047).